Consider the following 504-residue polypeptide: Maturase K (504 aa).

It belongs to the intron maturase 2 family. MatK subfamily.

The protein resides in the plastid. It localises to the chloroplast. Usually encoded in the trnK tRNA gene intron. Probably assists in splicing its own and other chloroplast group II introns. This Quercus coccifera (Kermes oak) protein is Maturase K.